The chain runs to 493 residues: Probable malate:quinone oxidoreductase (493 aa).

The protein belongs to the MQO family. Requires FAD as cofactor.

The enzyme catalyses (S)-malate + a quinone = a quinol + oxaloacetate. Its pathway is carbohydrate metabolism; tricarboxylic acid cycle; oxaloacetate from (S)-malate (quinone route): step 1/1. The protein is Probable malate:quinone oxidoreductase of Mycobacterium marinum (strain ATCC BAA-535 / M).